The sequence spans 100 residues: Small ribosomal subunit protein bS6 (100 aa).

It belongs to the bacterial ribosomal protein bS6 family.

Binds together with bS18 to 16S ribosomal RNA. The chain is Small ribosomal subunit protein bS6 from Tropheryma whipplei (strain TW08/27) (Whipple's bacillus).